The following is a 143-amino-acid chain: Large ribosomal subunit protein uL11 (143 aa).

The protein belongs to the universal ribosomal protein uL11 family. In terms of assembly, part of the ribosomal stalk of the 50S ribosomal subunit. Interacts with L10 and the large rRNA to form the base of the stalk. L10 forms an elongated spine to which L12 dimers bind in a sequential fashion forming a multimeric L10(L12)X complex. One or more lysine residues are methylated.

Forms part of the ribosomal stalk which helps the ribosome interact with GTP-bound translation factors. The protein is Large ribosomal subunit protein uL11 of Borreliella afzelii (strain PKo) (Borrelia afzelii).